Reading from the N-terminus, the 529-residue chain is RE1-silencing transcription factor B (529 aa).

Residues 156–178 (FRCKPCQYKAESEEEFVHHIKIH) form a C2H2-type 1 zinc finger. Residues 188–210 (SNKKAQGNEADSSISEESDVSKG) form a disordered region. 7 C2H2-type zinc fingers span residues 212–234 (IQCD…LKHH), 244–266 (YKCT…LRNH), 272–294 (YTCS…IRTH), 300–322 (YQCI…MRTH), 328–351 (FKCE…RQVH), 357–379 (LTCP…VELH), and 385–408 (FLCP…KSRH). The disordered stretch occupies residues 484–529 (LSSTQKKIKTSDARPEKILDKSRKSSCVKRKSDLLENSNDTQTSTV). Over residues 492–506 (KTSDARPEKILDKSR) the composition is skewed to basic and acidic residues. Over residues 518–529 (LENSNDTQTSTV) the composition is skewed to polar residues.

Its subcellular location is the nucleus. It localises to the cytoplasm. Transcriptional repressor which binds neuron-restrictive silencer element (NRSE) and represses neuronal gene transcription in non-neuronal cells. Plays a role in the early development of the nervous system and is required for proper patterning of the neuroectoderm during gastrulation. This involves the correct speciation of the neuroepithelial domain and adequate development of the non-neural ectoderm. This Xenopus laevis (African clawed frog) protein is RE1-silencing transcription factor B (rest-b).